Here is a 536-residue protein sequence, read N- to C-terminus: MNAAVFSPSALSLPISFSKTRSSFLSRKKGVKGEFRVFAVFGDESGLVEKKSQWRPLFDVEDPRSKAPPYKGKFLDVNQAIEVARFDIQYLDWRARQDLLTIMILHDKVVDVLNPLAREYKSIGTVKKELAGLQEELSKAHQQVHISEARVSTALDKLAHMEELVNDRLLPGRVVTELDKPSSSTTASAVELDREKTNTGAKSLNVSGPVPPYSPHLKNFWYPVAFTADLKHDTMVPIECFEQPWVIFRGEDGKPGCVRNTCAHRACPLDLGTVNEGRIQCPYHGWEYSTDGECKKMPSTKLLKVKIKSLPCLEQEGMIWIWPGDEPPAPILPSLQPPSGFLIHAELVMDLPVEHGLLLDNLLDLAHAPFTHTSTFAKGWSVPSLVKFLTPTSGLQGYWDPYPIDMEFKPPCIVLSTIGISKPGKLEGKSTQQCATHLHQLHVCLPSSKNKTRLLYRMSLDFAPILKNLPFMEHLWRHFAEQVLNEDLRLVLGQQERMLNGANIWNLPVAYDKLGVRYRLWRNAVDRGDDKLPFSG.

The N-terminal 36 residues, 1–36 (MNAAVFSPSALSLPISFSKTRSSFLSRKKGVKGEFR), are a transit peptide targeting the chloroplast. A coiled-coil region spans residues 123 to 150 (IGTVKKELAGLQEELSKAHQQVHISEAR). The region spanning 221–321 (WYPVAFTADL…CLEQEGMIWI (101 aa)) is the Rieske domain. The [2Fe-2S] cluster site is built by Cys262, His264, Cys281, and His284. Fe cation is bound by residues Asp360, Asp364, His367, and His372.

It is found in the plastid. Its subcellular location is the chloroplast membrane. The protein localises to the chloroplast thylakoid membrane. The enzyme catalyses chlorophyllide a + 2 NADPH + 2 O2 + 2 H(+) = chlorophyllide b + 2 NADP(+) + 3 H2O. It participates in porphyrin-containing compound metabolism; chlorophyll biosynthesis. Functionally, catalyzes a two-step oxygenase reaction involved in the synthesis of chlorophyll b. Acts specifically on the non-esterified chlorophyllide a and not on chlorophyll a. This is Chlorophyllide a oxygenase, chloroplastic (CAO) from Arabidopsis thaliana (Mouse-ear cress).